The following is a 202-amino-acid chain: Small ribosomal subunit protein uS4 (202 aa).

Residues 22–43 (TRKSARRAYPPGQHGQNRKKRS) form a disordered region. The S4 RNA-binding domain occupies 90-152 (MRLDNTVFRL…APSRKLVENN (63 aa)).

It belongs to the universal ribosomal protein uS4 family. Part of the 30S ribosomal subunit. Contacts protein S5. The interaction surface between S4 and S5 is involved in control of translational fidelity.

One of the primary rRNA binding proteins, it binds directly to 16S rRNA where it nucleates assembly of the body of the 30S subunit. Its function is as follows. With S5 and S12 plays an important role in translational accuracy. The chain is Small ribosomal subunit protein uS4 from Nostoc sp. (strain PCC 7120 / SAG 25.82 / UTEX 2576).